Reading from the N-terminus, the 219-residue chain is Beta-crystallin B2 (219 aa).

An N-acetylalanine modification is found at Ala-2. Residues 2–16 (ASEHQMPASKQQPAS) are N-terminal arm. Beta/gamma crystallin 'Greek key' domains are found at residues 17 to 56 (PNIA…LVHS) and 57 to 101 (GPWV…RPIK). Positions 102 to 120 (VVRAPRQPLPTRQTKDSQE) are connecting peptide. 2 consecutive Beta/gamma crystallin 'Greek key' domains span residues 121–162 (HKIV…RVQS) and 163–205 (GTWV…RRIR). A C-terminal arm region spans residues 207–219 (MQWHQRGAYHPSN).

The protein belongs to the beta/gamma-crystallin family. Homo/heterodimer, or complexes of higher-order. The structure of beta-crystallin oligomers seems to be stabilized through interactions between the N-terminal arms.

In terms of biological role, crystallins are the dominant structural components of the vertebrate eye lens. The sequence is that of Beta-crystallin B2 (CRYBB2) from Gallus gallus (Chicken).